Here is a 788-residue protein sequence, read N- to C-terminus: MKDKSIKVLEFNKIQEFLKNYTCTKAAKDIIEDLKPYDSVYEVREHLEETKEAFKLLITKGAPPFEGVYDIRSGISLAEKRSTLLPGQLLKIAAVLRCARRFKEYINHKEEEESYRVLENICEGIFSLPKIEEEIFNAIEGEDEIADRASSTLYNIRRSLKEKNYSVRDKINSLVRSYSSYLQENIYTVRGDRYVLPVKAEHKGAVPGLVHDQSSTGATLFIEPMSLVNLNNEIKELMLKEKAEIERILTVLSAKINANITGVKTDANIVWELDFIFAKAKFASEYNCTCPTINDEGIVDIIEGRHPLIDRREVVPISVKLGEEFTSLMITGPNTGGKTVTLKTVGLIHLMAMSGLMIPARENSVISYFNNVFADIGDEQSIEQSLSTFSSHMKNIVEIMDKADENSLVLFDELGAGTDPTEGAALAISILENLRKRGTKIIATTHYSELKAYALKKEGVENASVEFDVETLRPTYRLLIGIPGKSNAFEISKRLGLPDYIIDFARENISNENIRFEELIENLQEKSIKAQEDARLAENLKLERDKEKKKYEEKLEGLQKVRDNALIDARREAKNIIKEAKEEADKILKDIRQLERMGYSSDARRKLEEERKKLKDKLDSIEEKEIKTVHKGEALKNVKEGDEVLLASINQKVIVLSKPDNKGDVLVQAGIMKITANIKDLRAAKGSNSNSSSSKIKKSKKLNLNLRRVESSVDLRGMDAEEAIYTVDKYLDEAYLGGLGEVTIVHGKGTGVLRKTIMDMLKGHSHVKKYRLGEYGEGGTGVTVVELK.

Residue 332-339 (GPNTGGKT) participates in ATP binding. The 76-residue stretch at 713 to 788 (VDLRGMDAEE…GTGVTVVELK (76 aa)) folds into the Smr domain.

The protein belongs to the DNA mismatch repair MutS family. MutS2 subfamily. As to quaternary structure, homodimer. Binds to stalled ribosomes, contacting rRNA.

Its function is as follows. Endonuclease that is involved in the suppression of homologous recombination and thus may have a key role in the control of bacterial genetic diversity. In terms of biological role, acts as a ribosome collision sensor, splitting the ribosome into its 2 subunits. Detects stalled/collided 70S ribosomes which it binds and splits by an ATP-hydrolysis driven conformational change. Acts upstream of the ribosome quality control system (RQC), a ribosome-associated complex that mediates the extraction of incompletely synthesized nascent chains from stalled ribosomes and their subsequent degradation. Probably generates substrates for RQC. In Clostridium botulinum (strain Okra / Type B1), this protein is Endonuclease MutS2.